A 620-amino-acid polypeptide reads, in one-letter code: 1-deoxy-D-xylulose-5-phosphate synthase (620 aa).

Thiamine diphosphate contacts are provided by residues H80 and 121 to 123 (GHS). D152 is a binding site for Mg(2+). Residues 153–154 (GA), N181, Y288, and E370 contribute to the thiamine diphosphate site. Mg(2+) is bound at residue N181.

Belongs to the transketolase family. DXPS subfamily. Homodimer. It depends on Mg(2+) as a cofactor. Thiamine diphosphate serves as cofactor.

The enzyme catalyses D-glyceraldehyde 3-phosphate + pyruvate + H(+) = 1-deoxy-D-xylulose 5-phosphate + CO2. It functions in the pathway metabolic intermediate biosynthesis; 1-deoxy-D-xylulose 5-phosphate biosynthesis; 1-deoxy-D-xylulose 5-phosphate from D-glyceraldehyde 3-phosphate and pyruvate: step 1/1. Its function is as follows. Catalyzes the acyloin condensation reaction between C atoms 2 and 3 of pyruvate and glyceraldehyde 3-phosphate to yield 1-deoxy-D-xylulose-5-phosphate (DXP). The sequence is that of 1-deoxy-D-xylulose-5-phosphate synthase from Salmonella typhi.